The primary structure comprises 106 residues: Protein aveugle (106 aa).

Positions 26-91 (WTVSDVLKWY…WREIVKQRLK (66 aa)) constitute an SAM domain.

In terms of assembly, interacts with the SAM domain of cnk.

The protein resides in the cytoplasm. The protein localises to the membrane. Required for normal photoreceptor differentiation between Ras and Raf for EGFR signaling in the eye and for mitogen-activated protein kinase phosphorylation. Probably acts together with Cnk to promote Raf activation, perhaps by recruiting an activating kinase. This Drosophila melanogaster (Fruit fly) protein is Protein aveugle (ave).